Reading from the N-terminus, the 359-residue chain is Phosphate acyltransferase (359 aa).

Residues Ala-337–Ala-359 are disordered.

The protein belongs to the PlsX family. Homodimer. Probably interacts with PlsY.

It is found in the cytoplasm. It carries out the reaction a fatty acyl-[ACP] + phosphate = an acyl phosphate + holo-[ACP]. Its pathway is lipid metabolism; phospholipid metabolism. In terms of biological role, catalyzes the reversible formation of acyl-phosphate (acyl-PO(4)) from acyl-[acyl-carrier-protein] (acyl-ACP). This enzyme utilizes acyl-ACP as fatty acyl donor, but not acyl-CoA. The sequence is that of Phosphate acyltransferase from Cupriavidus necator (strain ATCC 17699 / DSM 428 / KCTC 22496 / NCIMB 10442 / H16 / Stanier 337) (Ralstonia eutropha).